A 90-amino-acid polypeptide reads, in one-letter code: Probable Fe(2+)-trafficking protein (90 aa).

This sequence belongs to the Fe(2+)-trafficking protein family.

Its function is as follows. Could be a mediator in iron transactions between iron acquisition and iron-requiring processes, such as synthesis and/or repair of Fe-S clusters in biosynthetic enzymes. This Methylococcus capsulatus (strain ATCC 33009 / NCIMB 11132 / Bath) protein is Probable Fe(2+)-trafficking protein.